The chain runs to 1097 residues: Platelet-derived growth factor receptor beta (1097 aa).

The signal sequence occupies residues 1-31 (MGLPEVMPASVLRGQLLLFVLLLLGPQISQG). 3 Ig-like C2-type domains span residues 32–119 (LVIT…YIFV), 128–209 (PMDS…YSLQ), and 213–308 (INVS…INVT). Residues 32–531 (LVITPPGPEF…VVPHSLPFKV (500 aa)) lie on the Extracellular side of the membrane. Residues asparagine 44, asparagine 88, and asparagine 102 are each glycosylated (N-linked (GlcNAc...) asparagine). Cysteine 53 and cysteine 99 are disulfide-bonded. Cysteine 148 and cysteine 189 are oxidised to a cystine. Asparagine 214 carries N-linked (GlcNAc...) asparagine glycosylation. Cysteine 234 and cysteine 290 are joined by a disulfide. 7 N-linked (GlcNAc...) asparagine glycosylation sites follow: asparagine 291, asparagine 306, asparagine 353, asparagine 370, asparagine 444, asparagine 467, and asparagine 478. The region spanning 415–523 (PVRVLELSES…GRDSQEVTVV (109 aa)) is the Ig-like C2-type 4 domain. Cysteines 435 and 507 form a disulfide. Residues 532-552 (VVISAILALVVLTVISLIILI) form a helical membrane-spanning segment. Topologically, residues 553–1097 (MLWQRKPRYE…PLAEAEDSFL (545 aa)) are cytoplasmic. Phosphotyrosine; by autocatalysis occurs at positions 561, 578, and 580. In terms of domain architecture, Protein kinase spans 599–961 (LVLGRTLGSG…QLVLLLERLL (363 aa)). Residues 605-613 (LGSGAFGQV) and lysine 633 contribute to the ATP site. A Phosphotyrosine; by ABL1 and ABL2 modification is found at tyrosine 685. Phosphotyrosine; by autocatalysis is present on residues tyrosine 715, tyrosine 739, tyrosine 750, tyrosine 762, tyrosine 770, tyrosine 774, and tyrosine 777. Aspartate 825 functions as the Proton acceptor in the catalytic mechanism. Tyrosine 856 bears the Phosphotyrosine; by autocatalysis mark. Phosphotyrosine; by ABL1 and ABL2 occurs at positions 933 and 969. Residues tyrosine 1008 and tyrosine 1020 each carry the phosphotyrosine; by autocatalysis modification. Positions 1016–1097 (TDNDYIIPLP…PLAEAEDSFL (82 aa)) are disordered. The segment covering 1042 to 1059 (SLASSTLNEVNTSSTISC) has biased composition (polar residues). Positions 1072–1081 (EPEAQLEQPQ) are enriched in low complexity.

Belongs to the protein kinase superfamily. Tyr protein kinase family. CSF-1/PDGF receptor subfamily. In terms of assembly, interacts with homodimeric PDGFB and PDGFD, and with heterodimers formed by PDGFA and PDGFB. May also interact with homodimeric PDGFC. Monomer in the absence of bound ligand. Interaction with homodimeric PDGFB, heterodimers formed by PDGFA and PDGFB or homodimeric PDGFD, leads to receptor dimerization, where both PDGFRA homodimers and heterodimers with PDGFRB are observed. Interacts with SH2B2/APS. Interacts directly (tyrosine phosphorylated) with SHB. Interacts (tyrosine phosphorylated) with PIK3R1 and RASA1. Interacts (tyrosine phosphorylated) with CBL. Interacts (tyrosine phosphorylated) with SRC and SRC family kinases. Interacts (tyrosine phosphorylated) with PIK3C2B, maybe indirectly. Interacts (tyrosine phosphorylated) with SHC1, GRB7, GRB10 and NCK1. Interaction with GRB2 is mediated by SHC1. Interacts (via C-terminus) with NHERF1. In terms of processing, N-glycosylated. Post-translationally, ubiquitinated. After autophosphorylation, the receptor is polyubiquitinated, leading to its degradation. Autophosphorylated on tyrosine residues upon ligand binding. Autophosphorylation occurs in trans, i.e. one subunit of the dimeric receptor phosphorylates tyrosine residues on the other subunit. Phosphorylation at Tyr-578, and to a lesser degree, Tyr-580 is important for interaction with SRC. Phosphorylation at Tyr-715 is important for interaction with GRB2. Phosphorylation at Tyr-739 and Tyr-750 is important for interaction with PIK3R1. Phosphorylation at Tyr-750 is important for interaction with NCK1. Phosphorylation at Tyr-770 and Tyr-856 is important for interaction with RASA1/GAP. Phosphorylation at Tyr-856 is important for efficient phosphorylation of PLCG1 and PTPN11, resulting in increased phosphorylation of AKT1, MAPK1/ERK2 and/or MAPK3/ERK1, PDCD6IP/ALIX and STAM, and in increased cell proliferation. Phosphorylation at Tyr-1008 is important for interaction with PTPN11. Phosphorylation at Tyr-1008 and Tyr-1020 is important for interaction with PLCG1. Dephosphorylated by PTPRJ at Tyr-750, Tyr-856, Tyr-1008 and Tyr-1020. Dephosphorylated by PTPN2 at Tyr-578 and Tyr-1020.

It is found in the cell membrane. The protein localises to the cytoplasmic vesicle. The protein resides in the lysosome lumen. The catalysed reaction is L-tyrosyl-[protein] + ATP = O-phospho-L-tyrosyl-[protein] + ADP + H(+). Its activity is regulated as follows. Present in an inactive conformation in the absence of bound ligand. Binding of PDGFB and/or PDGFD leads to dimerization and activation by autophosphorylation on tyrosine residues. In terms of biological role, tyrosine-protein kinase that acts as a cell-surface receptor for homodimeric PDGFB and PDGFD and for heterodimers formed by PDGFA and PDGFB, and plays an essential role in the regulation of embryonic development, cell proliferation, survival, differentiation, chemotaxis and migration. Plays an essential role in blood vessel development by promoting proliferation, migration and recruitment of pericytes and smooth muscle cells to endothelial cells. Plays a role in the migration of vascular smooth muscle cells and the formation of neointima at vascular injury sites. Required for normal development of the cardiovascular system. Required for normal recruitment of pericytes (mesangial cells) in the kidney glomerulus, and for normal formation of a branched network of capillaries in kidney glomeruli. Promotes rearrangement of the actin cytoskeleton and the formation of membrane ruffles. Binding of its cognate ligands - homodimeric PDGFB, heterodimers formed by PDGFA and PDGFB or homodimeric PDGFD -leads to the activation of several signaling cascades; the response depends on the nature of the bound ligand and is modulated by the formation of heterodimers between PDGFRA and PDGFRB. Phosphorylates PLCG1, PIK3R1, PTPN11, RASA1/GAP, CBL, SHC1 and NCK1. Activation of PLCG1 leads to the production of the cellular signaling molecules diacylglycerol and inositol 1,4,5-trisphosphate, mobilization of cytosolic Ca(2+) and the activation of protein kinase C. Phosphorylation of PIK3R1, the regulatory subunit of phosphatidylinositol 3-kinase, leads to the activation of the AKT1 signaling pathway. Phosphorylation of SHC1, or of the C-terminus of PTPN11, creates a binding site for GRB2, resulting in the activation of HRAS, RAF1 and down-stream MAP kinases, including MAPK1/ERK2 and/or MAPK3/ERK1. Promotes phosphorylation and activation of SRC family kinases. Promotes phosphorylation of PDCD6IP/ALIX and STAM. Receptor signaling is down-regulated by protein phosphatases that dephosphorylate the receptor and its down-stream effectors, and by rapid internalization of the activated receptor. The sequence is that of Platelet-derived growth factor receptor beta (Pdgfrb) from Rattus norvegicus (Rat).